A 356-amino-acid chain; its full sequence is DNA polymerase IV (356 aa).

Residues 6 to 187 form the UmuC domain; the sequence is IIHIDMDYFF…LDIGDFPGVG (182 aa). Mg(2+) is bound by residues aspartate 10 and aspartate 105. Glutamate 106 is a catalytic residue.

It belongs to the DNA polymerase type-Y family. In terms of assembly, monomer. It depends on Mg(2+) as a cofactor.

Its subcellular location is the cytoplasm. The catalysed reaction is DNA(n) + a 2'-deoxyribonucleoside 5'-triphosphate = DNA(n+1) + diphosphate. Its function is as follows. Poorly processive, error-prone DNA polymerase involved in untargeted mutagenesis. Copies undamaged DNA at stalled replication forks, which arise in vivo from mismatched or misaligned primer ends. These misaligned primers can be extended by PolIV. Exhibits no 3'-5' exonuclease (proofreading) activity. May be involved in translesional synthesis, in conjunction with the beta clamp from PolIII. The protein is DNA polymerase IV of Staphylococcus aureus (strain Mu50 / ATCC 700699).